The chain runs to 205 residues: ATP phosphoribosyltransferase (205 aa).

Belongs to the ATP phosphoribosyltransferase family. Short subfamily. Heteromultimer composed of HisG and HisZ subunits.

Its subcellular location is the cytoplasm. It catalyses the reaction 1-(5-phospho-beta-D-ribosyl)-ATP + diphosphate = 5-phospho-alpha-D-ribose 1-diphosphate + ATP. It functions in the pathway amino-acid biosynthesis; L-histidine biosynthesis; L-histidine from 5-phospho-alpha-D-ribose 1-diphosphate: step 1/9. Functionally, catalyzes the condensation of ATP and 5-phosphoribose 1-diphosphate to form N'-(5'-phosphoribosyl)-ATP (PR-ATP). Has a crucial role in the pathway because the rate of histidine biosynthesis seems to be controlled primarily by regulation of HisG enzymatic activity. In Ruthia magnifica subsp. Calyptogena magnifica, this protein is ATP phosphoribosyltransferase.